A 320-amino-acid chain; its full sequence is tRNA pseudouridine synthase B (320 aa).

The active-site Nucleophile is the Asp49.

This sequence belongs to the pseudouridine synthase TruB family. Type 1 subfamily.

The enzyme catalyses uridine(55) in tRNA = pseudouridine(55) in tRNA. Functionally, responsible for synthesis of pseudouridine from uracil-55 in the psi GC loop of transfer RNAs. The sequence is that of tRNA pseudouridine synthase B from Bartonella tribocorum (strain CIP 105476 / IBS 506).